The following is a 222-amino-acid chain: Large ribosomal subunit protein uL4 (222 aa).

Belongs to the universal ribosomal protein uL4 family. In terms of assembly, part of the 50S ribosomal subunit.

Functionally, one of the primary rRNA binding proteins, this protein initially binds near the 5'-end of the 23S rRNA. It is important during the early stages of 50S assembly. It makes multiple contacts with different domains of the 23S rRNA in the assembled 50S subunit and ribosome. Forms part of the polypeptide exit tunnel. This is Large ribosomal subunit protein uL4 from Methylacidiphilum infernorum (isolate V4) (Methylokorus infernorum (strain V4)).